The primary structure comprises 466 residues: Cysteine--tRNA ligase 1 (466 aa).

C27 contacts Zn(2+). Residues 29-39 (PTVQSPPHIGH) carry the 'HIGH' region motif. Residues C211, H236, and E240 each contribute to the Zn(2+) site. The 'KMSKS' region signature appears at 267 to 271 (KMSKS). K270 lines the ATP pocket.

The protein belongs to the class-I aminoacyl-tRNA synthetase family. Monomer. The cofactor is Zn(2+).

It is found in the cytoplasm. It catalyses the reaction tRNA(Cys) + L-cysteine + ATP = L-cysteinyl-tRNA(Cys) + AMP + diphosphate. This Tropheryma whipplei (strain TW08/27) (Whipple's bacillus) protein is Cysteine--tRNA ligase 1.